Reading from the N-terminus, the 193-residue chain is Cytidylate kinase (193 aa).

G12–T20 contacts ATP.

This sequence belongs to the cytidylate kinase family. Type 2 subfamily.

The protein resides in the cytoplasm. It carries out the reaction CMP + ATP = CDP + ADP. It catalyses the reaction dCMP + ATP = dCDP + ADP. This Thermococcus sibiricus (strain DSM 12597 / MM 739) protein is Cytidylate kinase.